Reading from the N-terminus, the 421-residue chain is Phosphoglycerate kinase (421 aa).

14 residues coordinate (2R)-3-phosphoglycerate: Val-23, Asp-24, Phe-25, Asn-26, Gln-41, Arg-42, Ser-65, His-66, Gly-68, Arg-69, Leu-124, Arg-125, His-172, and Arg-173. Gly-216 serves as a coordination point for ADP. Residue Gly-216 coordinates CDP. Lys-218 serves as a coordination point for AMP. Asp-221 is a CDP binding site. Asp-221 is a Mg(2+) binding site. Lys-222 lines the AMP pocket. Lys-222 contributes to the ATP binding site. Gly-240 provides a ligand contact to ADP. Gly-240 provides a ligand contact to CDP. Residues Gly-241 and Gly-315 each contribute to the AMP site. ATP-binding residues include Gly-241 and Gly-315. Residues Gly-340 and Phe-345 each coordinate CDP. Phe-345 lines the ADP pocket. Glu-346 is a binding site for AMP. ATP contacts are provided by Glu-346, Asp-377, and Thr-378. Asp-377 contributes to the Mg(2+) binding site.

It belongs to the phosphoglycerate kinase family. In terms of assembly, monomer. Mg(2+) serves as cofactor.

It is found in the cytoplasm. The protein resides in the mitochondrion. It carries out the reaction (2R)-3-phosphoglycerate + ATP = (2R)-3-phospho-glyceroyl phosphate + ADP. The protein operates within carbohydrate degradation; glycolysis; pyruvate from D-glyceraldehyde 3-phosphate: step 2/5. In terms of biological role, catalyzes one of the two ATP producing reactions in the glycolytic pathway via the reversible conversion of 1,3-diphosphoglycerate to 3-phosphoglycerate. Both L- and D- forms of purine and pyrimidine nucleotides can be used as substrates, but the activity is much lower on pyrimidines. Negatively regulates the biosynthesis of acetyl-CoA from pyruvate in the mitochondrion. This chain is Phosphoglycerate kinase (pgkA), found in Emericella nidulans (strain FGSC A4 / ATCC 38163 / CBS 112.46 / NRRL 194 / M139) (Aspergillus nidulans).